We begin with the raw amino-acid sequence, 260 residues long: MIETYSQTAPRSVATGPPVSMKIFMYLLTVFLITQMIGSALFAVYLHRRLDKIEDERNLYEDFVFMKTLQKCNKGEGSLSLLNCEEIKSQFEAFLKEIMLNNEMKKEENIAMQKGDQDPRIAAHVISEASSNPASVLRWAPKGYYTISSNLVSLENGKQLAVKRQGLYYVYAQVTFCSNRAASSQAPFVASLCLHSPSGTERVLLRAASSRGSSKPCGQQSIHLGGVFELHPGASVFVNVTDPSQVSHGTGFTSFGLLKL.

The Cytoplasmic segment spans residues 1–22 (MIETYSQTAPRSVATGPPVSMK). The chain crosses the membrane as a helical; Signal-anchor for type II membrane protein span at residues 23–46 (IFMYLLTVFLITQMIGSALFAVYL). Residues 47–260 (HRRLDKIEDE…GFTSFGLLKL (214 aa)) are Extracellular-facing. Residues 121–260 (IAAHVISEAS…GFTSFGLLKL (140 aa)) enclose the THD domain. The cysteines at positions 177 and 217 are disulfide-linked. An N-linked (GlcNAc...) asparagine glycan is attached at N239.

The protein belongs to the tumor necrosis factor family. As to quaternary structure, homotrimer. Interacts with CD28. CD40 ligand, soluble form: Exists as either a monomer or a homotrimer. Forms a ternary complex between CD40 and integrins for CD40-CD40LG signaling. Post-translationally, the soluble form derives from the membrane form by proteolytic processing.

It localises to the cell membrane. The protein resides in the cell surface. Its subcellular location is the secreted. Functionally, cytokine that acts as a ligand to CD40/TNFRSF5. Costimulates T-cell proliferation and cytokine production. Its cross-linking on T-cells generates a costimulatory signal which enhances the production of IL4 and IL10 in conjunction with the TCR/CD3 ligation and CD28 costimulation. Induces the activation of NF-kappa-B. Induces the activation of kinases MAPK8 and PAK2 in T-cells. Mediates B-cell proliferation in the absence of co-stimulus as well as IgE production in the presence of IL4. Involved in immunoglobulin class switching. In terms of biological role, acts as a ligand for integrins, specifically ITGA5:ITGB1 and ITGAV:ITGB3; both integrins and the CD40 receptor are required for activation of CD40-CD40LG signaling, which have cell-type dependent effects, such as B-cell activation, NF-kappa-B signaling and anti-apoptotic signaling. In Canis lupus familiaris (Dog), this protein is CD40 ligand (CD40LG).